Reading from the N-terminus, the 216-residue chain is Thymidylate kinase (216 aa).

Residue 9 to 16 (GIEGSGKT) coordinates ATP.

The protein belongs to the thymidylate kinase family.

It carries out the reaction dTMP + ATP = dTDP + ADP. In terms of biological role, phosphorylation of dTMP to form dTDP in both de novo and salvage pathways of dTTP synthesis. The sequence is that of Thymidylate kinase from Syntrophotalea carbinolica (strain DSM 2380 / NBRC 103641 / GraBd1) (Pelobacter carbinolicus).